The primary structure comprises 354 residues: Protein REDOX 1 (354 aa).

Cys-44 serves as a coordination point for Zn(2+). 45 to 49 serves as a coordination point for NAD(+); that stretch reads HSDLH. Positions 66, 97, 100, 103, and 111 each coordinate Zn(2+). NAD(+) contacts are provided by residues 185–190, Lys-214, 271–273, 295–297, and Arg-340; these read GLGGLG, VGA, and SAV.

The protein belongs to the zinc-containing alcohol dehydrogenase family. The cofactor is Zn(2+). As to expression, expressed in leaf epidermis.

The enzyme catalyses 3,17-didehydrostemmadenine + NADPH + H2O = (16S)-deshydroxymethyl-stemmadenine + formate + NADP(+). It catalyses the reaction 3,17-didehydrostemmadenine + NADPH + H2O = (16R)-deshydroxymethyl-stemmadenine + formate + NADP(+). The catalysed reaction is 17-dehydrostemmadenine + NADP(+) = 3,17-didehydrostemmadenine + NADPH. It participates in alkaloid biosynthesis. Its function is as follows. Component of iboga and aspidosperma monoterpenoid indole alkaloids (MIAs, e.g. tabersonine and catharanthine) biosynthesis pathway from 19E-geissoschizine. Catalyzes the first oxidation step of the unstable intermediate product resulting from the reaction triggered by the geissoschizine oxidase (GO) in the stemmadenine biosynthesis process from 19E-geissoschizine. This is Protein REDOX 1 from Catharanthus roseus (Madagascar periwinkle).